The chain runs to 338 residues: Methionine import ATP-binding protein MetN 1 (338 aa).

An ABC transporter domain is found at 2 to 241 (IELHQVSKSF…AKHATTKRFV (240 aa)). 38 to 45 (GYSGAGKS) lines the ATP pocket.

It belongs to the ABC transporter superfamily. Methionine importer (TC 3.A.1.24) family. The complex is composed of two ATP-binding proteins (MetN), two transmembrane proteins (MetI) and a solute-binding protein (MetQ).

The protein localises to the cell membrane. The enzyme catalyses L-methionine(out) + ATP + H2O = L-methionine(in) + ADP + phosphate + H(+). It catalyses the reaction D-methionine(out) + ATP + H2O = D-methionine(in) + ADP + phosphate + H(+). In terms of biological role, part of the ABC transporter complex MetNIQ involved in methionine import. Responsible for energy coupling to the transport system. The chain is Methionine import ATP-binding protein MetN 1 from Listeria monocytogenes serotype 4b (strain F2365).